The chain runs to 552 residues: Glutamine--tRNA ligase (552 aa).

Positions 34–44 match the 'HIGH' region motif; it reads PEPNGYLHIGH. ATP contacts are provided by residues 35–37 and 41–47; these read EPN and HIGHAKS. Residues Asp67 and Tyr212 each coordinate L-glutamine. ATP-binding positions include Thr231, 261–262, and 269–271; these read RL and MSK. Positions 268–272 match the 'KMSKS' region motif; the sequence is LMSKR.

It belongs to the class-I aminoacyl-tRNA synthetase family. In terms of assembly, monomer.

The protein localises to the cytoplasm. The catalysed reaction is tRNA(Gln) + L-glutamine + ATP = L-glutaminyl-tRNA(Gln) + AMP + diphosphate. This Hamiltonella defensa subsp. Acyrthosiphon pisum (strain 5AT) protein is Glutamine--tRNA ligase.